The primary structure comprises 1083 residues: Error-prone DNA polymerase (1083 aa).

It belongs to the DNA polymerase type-C family. DnaE2 subfamily.

The protein localises to the cytoplasm. The enzyme catalyses DNA(n) + a 2'-deoxyribonucleoside 5'-triphosphate = DNA(n+1) + diphosphate. In terms of biological role, DNA polymerase involved in damage-induced mutagenesis and translesion synthesis (TLS). It is not the major replicative DNA polymerase. This chain is Error-prone DNA polymerase, found in Xanthomonas axonopodis pv. citri (strain 306).